Reading from the N-terminus, the 356-residue chain is Testis-expressed protein 19.1 (356 aa).

Residues 1 to 78 (MCPPVSVRHG…WDAEPMEHLS (78 aa)) are interaction with LIRE1. The segment covering 59 to 72 (LSEEEEEEEVWDAE) has biased composition (acidic residues). The interval 59-107 (LSEEEEEEEVWDAEPMEHLSESESLESDSKQDAGSEQDAGSEPNTRSEQ) is disordered. Residues 73 to 91 (PMEHLSESESLESDSKQDA) are compositionally biased toward basic and acidic residues. An important for interaction with piRNA region spans residues 139–186 (QWVVFSISVPTELLPQEAVPLDLGPEDVEWTQALPWRLDVLFPCSHRL).

Interacts with UBR2; does not lead to Tex19.1 degradation and stabilizes it. Interacts with piRNA-associated proteins DDX4, EDC4, MAEL, PIWIL1, PIWIL2, RANBP9 and TDRD6. Interacts with L1RE1.

Its subcellular location is the cytoplasm. In terms of biological role, required during spermatogenesis and placenta development, participating in the repression of retrotransposable elements and prevent their mobilization. Collaborates with the Piwi-interacting RNA (piRNA) pathway, which mediates the repression of transposable elements during meiosis by forming complexes composed of piRNAs and Piwi proteins. Interacts with Piwi proteins and directly binds piRNAs, a class of 24 to 30 nucleotide RNAs that are generated by a Dicer-independent mechanism and are primarily derived from transposons and other repeated sequence elements. Also during spermatogenesis, promotes, with UBR2, SPO11-dependent recombination foci to accumulate and drive robust homologous chromosome synapsis. Interacts with LINE-1 retrotransposon encoded LIRE1, stimulates LIRE1 polyubiquitination, mediated by UBR2, and degradation, inhibiting LINE-1 retrotransposon mobilization. The sequence is that of Testis-expressed protein 19.1 (Tex19.1) from Rattus norvegicus (Rat).